The sequence spans 307 residues: UDP-N-acetylenolpyruvoylglucosamine reductase (307 aa).

Positions 33–197 (TGGNADFYIT…LEAAFTLAPG (165 aa)) constitute an FAD-binding PCMH-type domain. Arginine 176 is an active-site residue. Serine 226 (proton donor) is an active-site residue. Residue glutamate 296 is part of the active site.

This sequence belongs to the MurB family. FAD serves as cofactor.

It localises to the cytoplasm. It carries out the reaction UDP-N-acetyl-alpha-D-muramate + NADP(+) = UDP-N-acetyl-3-O-(1-carboxyvinyl)-alpha-D-glucosamine + NADPH + H(+). It functions in the pathway cell wall biogenesis; peptidoglycan biosynthesis. In terms of biological role, cell wall formation. This Staphylococcus aureus (strain Mu3 / ATCC 700698) protein is UDP-N-acetylenolpyruvoylglucosamine reductase.